The following is a 286-amino-acid chain: MRSVGLIPNIQKDQVAEITSRMYKILSEHDIDVYLTHEGADLIGTESAGVSSDVMGEVAEMIIILGGDGTILKAAREYAPYDIPLLGINLGKMGFLAEIEANEVMAYLESLLTGNYTIEERMMLDATVLRDRKEITTFSALNDVIIAKGPFSRIIEVETKVGGNYLETYPGDGLIVTSPTGSTGYSFSAGGPIISSNLEVMMITPICPHLMHNRSVIISSDEVVTAKMKTNYAVVVLTVDGQQGFTLQDGDEIKVKKSNYKTKLVKLRRRSFYQLLNEKLTGGQEV.

Residue Asp68 is the Proton acceptor of the active site. NAD(+) contacts are provided by residues 68 to 69 (DG), Lys73, 142 to 143 (ND), Arg153, Asp172, 183 to 188 (TGYSFS), and Gln242.

It belongs to the NAD kinase family. A divalent metal cation is required as a cofactor.

The protein resides in the cytoplasm. The catalysed reaction is NAD(+) + ATP = ADP + NADP(+) + H(+). Functionally, involved in the regulation of the intracellular balance of NAD and NADP, and is a key enzyme in the biosynthesis of NADP. Catalyzes specifically the phosphorylation on 2'-hydroxyl of the adenosine moiety of NAD to yield NADP. The polypeptide is NAD kinase (Natranaerobius thermophilus (strain ATCC BAA-1301 / DSM 18059 / JW/NM-WN-LF)).